A 286-amino-acid polypeptide reads, in one-letter code: Homoserine kinase (286 aa).

ATP is bound at residue 78–88 (PVAHGLGSSSS).

The protein belongs to the GHMP kinase family. Homoserine kinase subfamily.

It is found in the cytoplasm. It catalyses the reaction L-homoserine + ATP = O-phospho-L-homoserine + ADP + H(+). It participates in amino-acid biosynthesis; L-threonine biosynthesis; L-threonine from L-aspartate: step 4/5. Catalyzes the ATP-dependent phosphorylation of L-homoserine to L-homoserine phosphate. This chain is Homoserine kinase, found in Limosilactobacillus fermentum (strain NBRC 3956 / LMG 18251) (Lactobacillus fermentum).